Here is a 658-residue protein sequence, read N- to C-terminus: ATP-dependent DNA helicase Rep (658 aa).

Residues 1–280 (MSLNFNQKNA…IKMEQNYRSY (280 aa)) form the UvrD-like helicase ATP-binding domain. ATP-binding positions include 22-29 (AGAGSGKT) and Arg278. The UvrD-like helicase C-terminal domain occupies 281–564 (GRILKAANKL…QLMTLHSSKG (284 aa)).

The protein belongs to the helicase family. UvrD subfamily. In terms of assembly, homodimer.

The catalysed reaction is Couples ATP hydrolysis with the unwinding of duplex DNA by translocating in the 3'-5' direction.. It catalyses the reaction ATP + H2O = ADP + phosphate + H(+). In terms of biological role, rep helicase is a single-stranded DNA-dependent ATPase involved in DNA replication; it can initiate unwinding at a nick in the DNA. It binds to the single-stranded DNA and acts in a progressive fashion along the DNA in the 3' to 5' direction. This Buchnera aphidicola subsp. Schizaphis graminum (strain Sg) protein is ATP-dependent DNA helicase Rep.